We begin with the raw amino-acid sequence, 117 residues long: Probable prefoldin subunit 1 (117 aa).

It belongs to the prefoldin subunit beta family. As to quaternary structure, heterohexamer of two PFD-alpha type and four PFD-beta type subunits. As to expression, expressed in the distal cell tip of developing embryos.

The protein localises to the cytoplasm. Binds specifically to cytosolic chaperonin (c-CPN) and transfers target proteins to it. Binds to nascent polypeptide chain and promotes folding in an environment in which there are many competing pathways for nonnative proteins. Has a role in gonadogenesis. The chain is Probable prefoldin subunit 1 (pfd-1) from Caenorhabditis elegans.